We begin with the raw amino-acid sequence, 398 residues long: Ribosomal RNA small subunit methyltransferase B (398 aa).

Residues 221–227 (CGGAGLK), aspartate 242, aspartate 268, and aspartate 283 each bind S-adenosyl-L-methionine. Cysteine 336 acts as the Nucleophile in catalysis.

It belongs to the class I-like SAM-binding methyltransferase superfamily. RsmB/NOP family.

It is found in the cytoplasm. The enzyme catalyses cytidine(967) in 16S rRNA + S-adenosyl-L-methionine = 5-methylcytidine(967) in 16S rRNA + S-adenosyl-L-homocysteine + H(+). Functionally, specifically methylates the cytosine at position 967 (m5C967) of 16S rRNA. This chain is Ribosomal RNA small subunit methyltransferase B, found in Thermus thermophilus (strain ATCC 27634 / DSM 579 / HB8).